We begin with the raw amino-acid sequence, 346 residues long: Dihydroorotase (346 aa).

Residues His-13 and His-15 each contribute to the Zn(2+) site. Substrate-binding positions include His-15 to Arg-17 and Asn-41. Lys-99, His-136, and His-174 together coordinate Zn(2+). Residue Lys-99 is modified to N6-carboxylysine. His-136 is a substrate binding site. Leu-219 contributes to the substrate binding site. Residue Asp-247 coordinates Zn(2+). Asp-247 is a catalytic residue. Residues His-251 and Ala-263 each coordinate substrate.

Belongs to the metallo-dependent hydrolases superfamily. DHOase family. Class II DHOase subfamily. In terms of assembly, homodimer. It depends on Zn(2+) as a cofactor.

It catalyses the reaction (S)-dihydroorotate + H2O = N-carbamoyl-L-aspartate + H(+). It functions in the pathway pyrimidine metabolism; UMP biosynthesis via de novo pathway; (S)-dihydroorotate from bicarbonate: step 3/3. Functionally, catalyzes the reversible cyclization of carbamoyl aspartate to dihydroorotate. The protein is Dihydroorotase of Rhizobium leguminosarum bv. trifolii (strain WSM2304).